Consider the following 185-residue polypeptide: MLLVIGLGNPGKEYQYTRHNVGFIAIEKIANQYNSSFSTKKKFNCEIAETISDGQKIIFIKPTTYMNLSGKSVISVKTYYNIYPAKIFVIHDDIDLDTGRIKFKTGGGNGGHNGLKSIDGVIGNNYNRIRIGVGRPQNNQDVADYVLNHFSKPEYETVMQAIDRITSNFGLILENKLEEFKNKIA.

Residue tyrosine 14 participates in tRNA binding. The active-site Proton acceptor is the histidine 19. TRNA-binding residues include tyrosine 65, asparagine 67, and asparagine 113.

Belongs to the PTH family. As to quaternary structure, monomer.

Its subcellular location is the cytoplasm. It carries out the reaction an N-acyl-L-alpha-aminoacyl-tRNA + H2O = an N-acyl-L-amino acid + a tRNA + H(+). In terms of biological role, hydrolyzes ribosome-free peptidyl-tRNAs (with 1 or more amino acids incorporated), which drop off the ribosome during protein synthesis, or as a result of ribosome stalling. Functionally, catalyzes the release of premature peptidyl moieties from peptidyl-tRNA molecules trapped in stalled 50S ribosomal subunits, and thus maintains levels of free tRNAs and 50S ribosomes. This chain is Peptidyl-tRNA hydrolase, found in Rickettsia africae (strain ESF-5).